A 161-amino-acid polypeptide reads, in one-letter code: Putative 2'-deoxynucleoside 5'-phosphate N-hydrolase 1 (161 aa).

Substrate contacts are provided by residues 27–33, Tyr42, His60, Glu106, and 128–130; these read FLSGSIR and SSM.

The protein belongs to the 2'-deoxynucleoside 5'-phosphate N-hydrolase 1 family. Monomer and homodimer.

The catalysed reaction is a pyrimidine 2'-deoxyribonucleoside 5'-phosphate + H2O = a pyrimidine nucleobase + 2-deoxy-D-ribose 5-phosphate. The enzyme catalyses a purine 2'-deoxyribonucleoside 5'-phosphate + H2O = a purine nucleobase + 2-deoxy-D-ribose 5-phosphate. In terms of biological role, catalyzes the cleavage of the N-glycosidic bond of deoxyribonucleoside 5'-monophosphates to yield deoxyribose 5-phosphate and a purine or pyrimidine base. The polypeptide is Putative 2'-deoxynucleoside 5'-phosphate N-hydrolase 1 (Methanosarcina mazei (strain ATCC BAA-159 / DSM 3647 / Goe1 / Go1 / JCM 11833 / OCM 88) (Methanosarcina frisia)).